Consider the following 279-residue polypeptide: Probable flavonol synthase 4 (279 aa).

The disordered stretch occupies residues 1–25 (MEVERDQHKPPLSLQNNKIPSSQNF). The span at 13-25 (SLQNNKIPSSQNF) shows a compositional bias: polar residues. One can recognise a Fe2OG dioxygenase domain in the interval 156–256 (GAGYLMKINY…RMSSVVHIKP (101 aa)). 164-166 (NYY) lines the 2-oxoglutarate pocket. Fe cation is bound by residues His181, Asp183, and His237. 247 to 249 (RMS) provides a ligand contact to 2-oxoglutarate.

It belongs to the iron/ascorbate-dependent oxidoreductase family. Fe(2+) serves as cofactor.

The enzyme catalyses a (2R,3R)-dihydroflavonol + 2-oxoglutarate + O2 = a flavonol + succinate + CO2 + H2O. The protein operates within secondary metabolite biosynthesis; flavonoid biosynthesis. This chain is Probable flavonol synthase 4 (FLS4), found in Arabidopsis thaliana (Mouse-ear cress).